The chain runs to 282 residues: 2-dehydro-3-deoxyphosphooctonate aldolase (282 aa).

Belongs to the KdsA family.

The protein localises to the cytoplasm. The enzyme catalyses D-arabinose 5-phosphate + phosphoenolpyruvate + H2O = 3-deoxy-alpha-D-manno-2-octulosonate-8-phosphate + phosphate. Its pathway is carbohydrate biosynthesis; 3-deoxy-D-manno-octulosonate biosynthesis; 3-deoxy-D-manno-octulosonate from D-ribulose 5-phosphate: step 2/3. It functions in the pathway bacterial outer membrane biogenesis; lipopolysaccharide biosynthesis. This is 2-dehydro-3-deoxyphosphooctonate aldolase from Granulibacter bethesdensis (strain ATCC BAA-1260 / CGDNIH1).